Consider the following 208-residue polypeptide: Large ribosomal subunit protein uL4 (208 aa).

The tract at residues 44-79 (QRQGTHKSKERSEISGSTRKIGRQKGGGGARRGDMN) is disordered.

This sequence belongs to the universal ribosomal protein uL4 family. Part of the 50S ribosomal subunit.

Functionally, one of the primary rRNA binding proteins, this protein initially binds near the 5'-end of the 23S rRNA. It is important during the early stages of 50S assembly. It makes multiple contacts with different domains of the 23S rRNA in the assembled 50S subunit and ribosome. Its function is as follows. Forms part of the polypeptide exit tunnel. The sequence is that of Large ribosomal subunit protein uL4 from Bacteroides fragilis (strain YCH46).